A 303-amino-acid polypeptide reads, in one-letter code: Methionyl-tRNA formyltransferase (303 aa).

108–111 (SDLP) lines the (6S)-5,6,7,8-tetrahydrofolate pocket.

This sequence belongs to the Fmt family.

The enzyme catalyses L-methionyl-tRNA(fMet) + (6R)-10-formyltetrahydrofolate = N-formyl-L-methionyl-tRNA(fMet) + (6S)-5,6,7,8-tetrahydrofolate + H(+). Attaches a formyl group to the free amino group of methionyl-tRNA(fMet). The formyl group appears to play a dual role in the initiator identity of N-formylmethionyl-tRNA by promoting its recognition by IF2 and preventing the misappropriation of this tRNA by the elongation apparatus. This chain is Methionyl-tRNA formyltransferase, found in Rickettsia prowazekii (strain Madrid E).